An 807-amino-acid polypeptide reads, in one-letter code: Maternal DNA replication licensing factor mcm3 (807 aa).

An MCM domain is found at 295–502 (IFEHLSKSLA…NDQEIADHVL (208 aa)). 345-352 (GDPSVAKS) is an ATP binding site. The short motif at 477-480 (SRFD) is the Arginine finger element. The segment covering 664–673 (KTDKDLHDEN) has biased composition (basic and acidic residues). Positions 664–741 (KTDKDLHDEN…QDGKRSLSQN (78 aa)) are disordered. The span at 707 to 723 (FSEQDSSLNENLSQSLR) shows a compositional bias: polar residues. Basic and acidic residues predominate over residues 727-741 (KKAESQDGKRSLSQN).

This sequence belongs to the MCM family. In terms of assembly, component of the mcm2-7 complex (RLF-M). The complex forms a toroidal hexameric ring with the proposed subunit order mcm2-mcm6-mcm4-mcm7-mcm3-mcm5. The heterodimer of mmcm3/mcm5 interacts with mcm4, mmcm6, mcm7 and weakly with mcm2. Interacts with mcm7, though this interaction may not be direct, and remains in a complex with mcm7 throughout the cell cycle. Component of the CMG helicase complex, composed of the mcm2-7 complex, the GINS complex and cdc45.

It is found in the nucleus. The protein localises to the chromosome. It carries out the reaction ATP + H2O = ADP + phosphate + H(+). Acts as a component of the mcm2-7 complex (mcm complex) which is the putative replicative helicase essential for 'once per cell cycle' DNA replication initiation and elongation in eukaryotic cells. The active ATPase sites in the mcm2-7 ring are formed through the interaction surfaces of two neighboring subunits such that a critical structure of a conserved arginine finger motif is provided in trans relative to the ATP-binding site of the Walker A box of the adjacent subunit. The six ATPase active sites, however, are likely to contribute differentially to the complex helicase activity. The existence of maternal and zygotic forms of mcm3 and mcm6 suggests that specific forms of mcm2-7 complexes may be used during different stages of development. In Xenopus laevis (African clawed frog), this protein is Maternal DNA replication licensing factor mcm3 (mmcm3).